Consider the following 448-residue polypeptide: Fibulin-5 (448 aa).

The signal sequence occupies residues M1–A23. The EGF-like 1; calcium-binding domain occupies D42–N82. Cystine bridges form between C46/C59, C53/C68, C131/C144, C138/C153, C155/C166, C172/C181, C177/C190, C192/C205, C211/C221, C217/C230, C232/C245, C251/C262, C258/C271, C273/C286, C292/C305, C299/C314, and C320/C332. The Cell attachment site motif lies at R54 to D56. The region spanning D127–L167 is the EGF-like 2; calcium-binding domain. In terms of domain architecture, EGF-like 3; calcium-binding spans D168–Q206. The EGF-like 4; calcium-binding domain maps to D207–S246. The segment at C245–F448 is interaction with LOXL1. In terms of domain architecture, EGF-like 5; calcium-binding spans D247–Q287. Residues N283 and N296 are each glycosylated (N-linked (GlcNAc...) asparagine). One can recognise an EGF-like 6; calcium-binding domain in the interval D288–M333.

This sequence belongs to the fibulin family. In terms of assembly, homodimer. Monomer, homodimerizes in presence of Ca(2+). Interacts with ELN. Interacts (via N-terminus) with the integrins ITGAV/ITGB3, ITGAV/ITGB5 and ITGA9/ITGB1. Interacts with FBN1 (via N-terminal domain). Forms a ternary complex with ELN and FBN1. Interacts with EFEMP2 with moderate affinity. Interacts with LOXL1. In terms of processing, N-glycosylated. In terms of tissue distribution, expressed in skin fibroblasts (at protein level). Expressed predominantly in heart, ovary, and colon but also in kidney, pancreas, testis, lung and placenta. Not detectable in brain, liver, thymus, prostate, or peripheral blood leukocytes.

Its subcellular location is the secreted. The protein localises to the extracellular space. It is found in the extracellular matrix. Its function is as follows. Essential for elastic fiber formation, is involved in the assembly of continuous elastin (ELN) polymer and promotes the interaction of microfibrils and ELN. Stabilizes and organizes elastic fibers in the skin, lung and vasculature. Promotes adhesion of endothelial cells through interaction of integrins and the RGD motif. Vascular ligand for integrin receptors which may play a role in vascular development and remodeling. May act as an adapter that mediates the interaction between FBN1 and ELN. The polypeptide is Fibulin-5 (FBLN5) (Homo sapiens (Human)).